The chain runs to 417 residues: NADH-dependent phenylglyoxylate dehydrogenase subunit alpha (417 aa).

In terms of assembly, dimer of heteropentamers composed of an alpha (PadG), a beta (PadI), a gamma (PadE), a delta (PadF) and an epsilon (PadH) subunit.

The enzyme catalyses phenylglyoxylate + NAD(+) + CoA = benzoyl-CoA + CO2 + NADH. With respect to regulation, activated by magnesium ions and thiamine diphosphate. In terms of biological role, involved in the anaerobic metabolism of phenylalanine and phenylacetate. Catalyzes the oxidative decarboxylation of phenylglyoxylate to benzoyl-CoA and CO(2). It can also react slowly with 2-oxo-3-methylbutanoate and use different electron acceptors such as benzyl viologen, methyl viologen, FAD or FMN, but NAD seems to be the physiological electron acceptor. Also catalyzes an isotope exchange between CO(2) and the carboxyl group which proves partial or complete reversibility of the oxidative decarboxylation reaction. The sequence is that of NADH-dependent phenylglyoxylate dehydrogenase subunit alpha (padG) from Aromatoleum evansii (Azoarcus evansii).